The following is a 221-amino-acid chain: Protein Pisl_1005 (221 aa).

One can recognise an AMMECR1 domain in the interval 8-201 (EEGAYLVKLA…EKTPGGEIYE (194 aa)).

The sequence is that of Protein Pisl_1005 from Pyrobaculum islandicum (strain DSM 4184 / JCM 9189 / GEO3).